The sequence spans 576 residues: Protein alan shepard (576 aa).

The span at 1 to 12 (MHPRYSPAPPPQ) shows a compositional bias: pro residues. Residues 1–66 (MHPRYSPAPP…GSSSSAAAAP (66 aa)) are disordered. Position 5 is a phosphotyrosine (Tyr-5). The span at 13–24 (QQQQMGGPPHQQ) shows a compositional bias: low complexity. The span at 25–35 (QGGGGGGGGNM) shows a compositional bias: gly residues. The span at 37-54 (GPSNAQQLPPQIPRSQNY) shows a compositional bias: polar residues. Positions 55–66 (SNGSSSSAAAAP) are enriched in low complexity. Tyr-125 and Tyr-142 each carry phosphotyrosine. Residues 164 to 225 (PATTTYGQRV…TVQNQNQQGG (62 aa)) are disordered. The span at 178–225 (SPSNTNSSSSSNTGSQSGTLSTSLSNTTNTNTNMGPNGTVQNQNQQGG) shows a compositional bias: low complexity. RRM domains are found at residues 231-302 (TNLY…MAKQ) and 308-387 (TNLY…FADG). A disordered region spans residues 538–576 (YAPPPTIIPTMPMTDSEQASTAASPDEAYTQYPHQAAPK).

Its function is as follows. Has a role in the perception of gravity. The protein is Protein alan shepard of Drosophila simulans (Fruit fly).